Reading from the N-terminus, the 729-residue chain is MLYQSETLQLHWLENGIAELVFDAPGSVNKLDTQTVANLGEALVVLEKQSELKGLLLRSAKAAFIVGADITEFLSLFNEPPEKLHQWLVFANDIFNRLEDLPVPTIAAINGYALGGGCECILATDFRVASPEARIGLPETKLGIMPGFGGSVRLPRLLGADSALEIIAAGKDIIAKDALKVGLVDAVVAPEKLVDAALSILNQAIDGKLDWQAARRPKLEPLKLNPTEAAMCFTIAKGMVMQVAGKHYPAPLTAVKTIEAAAKFGRAEALILETNSFVPLAGSNEARALVGIFLNDQYVKGQAKKLSKGVSAPKQAAVLGAGIMGGGIAYQSALKGVPVIMKDINDKSLTLGMNEAAKLLNKQLERGKIDGLKMANILATIQPTLDYAGIERAQVIVEAVVENPKVKAAVLAEVETLIGEETVLASNTSTIPIDQLAKSLKRPENFCGMHFFNPVHRMPLVEIIRGTKTSDKTIAAVVAYATQMGKTPIVVNDCPGFFVNRVLFPYLAGFGMLVRDGADFRQIDKVMEKQFGWPMGPAYLLDVVGIDTAHHAQAVMAVGFPERMNKDYRDAVDVMFDNQRFGQKNGQGFYRYTQDTKGKPRKENDEQVDALLAQVSQPLQKFSDDDIIARTMIPMINEVVRCLEEGIIASPAEGDMALVYGLGFPPFHGGVFRYLDTIGSANYVEMAQRYTHLGALYQVPPGLRAKAEHNESYYPVAAALLDVSISQPA.

The tract at residues 1 to 189 is enoyl-CoA hydratase/isomerase; it reads MLYQSETLQL…KVGLVDAVVA (189 aa). D296 lines the substrate pocket. Residues 311–729 are 3-hydroxyacyl-CoA dehydrogenase; sequence SAPKQAAVLG…LLDVSISQPA (419 aa). NAD(+) is bound by residues M324, D343, 400–402, K407, and S429; that span reads VVE. Residue H450 is the For 3-hydroxyacyl-CoA dehydrogenase activity of the active site. N453 provides a ligand contact to NAD(+). 2 residues coordinate substrate: N500 and Y660.

It in the N-terminal section; belongs to the enoyl-CoA hydratase/isomerase family. This sequence in the C-terminal section; belongs to the 3-hydroxyacyl-CoA dehydrogenase family. Heterotetramer of two alpha chains (FadB) and two beta chains (FadA).

The enzyme catalyses a (3S)-3-hydroxyacyl-CoA + NAD(+) = a 3-oxoacyl-CoA + NADH + H(+). It carries out the reaction a (3S)-3-hydroxyacyl-CoA = a (2E)-enoyl-CoA + H2O. The catalysed reaction is a 4-saturated-(3S)-3-hydroxyacyl-CoA = a (3E)-enoyl-CoA + H2O. It catalyses the reaction (3S)-3-hydroxybutanoyl-CoA = (3R)-3-hydroxybutanoyl-CoA. The enzyme catalyses a (3Z)-enoyl-CoA = a 4-saturated (2E)-enoyl-CoA. It carries out the reaction a (3E)-enoyl-CoA = a 4-saturated (2E)-enoyl-CoA. It participates in lipid metabolism; fatty acid beta-oxidation. Its function is as follows. Involved in the aerobic and anaerobic degradation of long-chain fatty acids via beta-oxidation cycle. Catalyzes the formation of 3-oxoacyl-CoA from enoyl-CoA via L-3-hydroxyacyl-CoA. It can also use D-3-hydroxyacyl-CoA and cis-3-enoyl-CoA as substrate. The polypeptide is Fatty acid oxidation complex subunit alpha (Yersinia enterocolitica serotype O:8 / biotype 1B (strain NCTC 13174 / 8081)).